We begin with the raw amino-acid sequence, 259 residues long: Ribonuclease HII (259 aa).

The RNase H type-2 domain occupies 70–258 (TLIAGIDEVG…VKSLVLGKKE (189 aa)). Positions 76, 77, and 168 each coordinate a divalent metal cation.

It belongs to the RNase HII family. The cofactor is Mn(2+). Requires Mg(2+) as cofactor.

It is found in the cytoplasm. It carries out the reaction Endonucleolytic cleavage to 5'-phosphomonoester.. Functionally, endonuclease that specifically degrades the RNA of RNA-DNA hybrids. This is Ribonuclease HII from Streptococcus pneumoniae serotype 19F (strain G54).